Here is a 110-residue protein sequence, read N- to C-terminus: Small ribosomal subunit protein bS16 (110 aa).

Residues 84 to 110 (KRTARNNPEKAVPRKERKAQAEAAAKS) form a disordered region. Residues 90–103 (NPEKAVPRKERKAQ) show a composition bias toward basic and acidic residues.

This sequence belongs to the bacterial ribosomal protein bS16 family.

In Nitrobacter hamburgensis (strain DSM 10229 / NCIMB 13809 / X14), this protein is Small ribosomal subunit protein bS16.